Reading from the N-terminus, the 4776-residue chain is Pneumococcal serine-rich repeat protein (4776 aa).

An N-terminal signal peptide occupies residues Met-1–Asn-72. Ser-73, Ser-75, Ser-76, Ser-78, Ser-80, Ser-82, Ser-94, Ser-100, Ser-108, Ser-110, Ser-118, Ser-120, and Ser-121 each carry an O-linked (GlcNAc...) serine glycan. A serine-rich repeat region 1, SRR1 region spans residues Ser-73–Ser-121. The tract at residues Ser-86–Ser-112 is disordered. A self aggregating domain region spans residues Thr-122–Arg-166. The interval Thr-122–Ser-394 is basic region, BR. A Host furin cleavage recognition motif is present at residues Lys-164 to Arg-168. The interval Thr-273 to Val-341 is keratin 10-binding domain, cell-type specific binding to lung-derived cells. Residues Gln-395–Ser-4712 are serine-rich repeat region 2, SRR2. 27 disordered regions span residues Ala-481–Ala-627, Ala-861–Thr-889, Ala-925–Ala-965, Ser-1052–Ala-1085, Ala-1123–Ala-1153, Ala-1171–Ala-1199, Ala-1311–Thr-1357, Ala-1671–Ala-1731, Ser-1792–Ala-1863, Ala-2105–Thr-2133, Ala-2169–Ala-2209, Ser-2296–Ala-2329, Ala-2367–Ala-2397, Ala-2415–Ala-2443, Ala-2571–Ala-2631, Glu-2737–Ala-2805, Ala-2855–Ala-3113, Ala-3347–Thr-3375, Ala-3411–Ala-3451, Ser-3538–Ala-3571, Ala-3609–Ala-3639, Ala-3657–Ala-3685, Ala-3797–Thr-3843, Ala-4167–Ala-4197, Ala-4215–Ala-4243, Ala-4355–Thr-4401, and Ser-4706–Ser-4747. Residues Val-4715–Ser-4747 show a composition bias toward polar residues. The short motif at Leu-4740–Gly-4744 is the LPXTG sorting signal element. Position 4743 is a pentaglycyl murein peptidoglycan amidated threonine (Thr-4743). Positions Gly-4744–Glu-4776 are cleaved as a propeptide — removed by sortase.

This sequence belongs to the serine-rich repeat protein (SRRP) family. As to quaternary structure, binds to human and mouse protein keratin 10 (KRT10). Glycosylated. Only truncated substrates greater than 25 residues long are glycosylated by the Gtf1-Gtf2 complex in vitro; only Ser residues have been seen to be glycosylated. Based on electrophoretic mobility it is probable that most of the Ser residues in SSR1 and SSR2 are O-GlcNAcylated. Subsequent glycosylation by up to 7 sugar transferases (Gtf3 and GlyAT, GlyB, GlyD, GlyE, GlyF and GlyG) is able to generate very high sugar polymorphism. Post-translationally, can be cleaved by human furin protease; this fragment contributes to self-aggregation and possibly biofilm formation in vitro.

Its subcellular location is the secreted. It localises to the cell wall. The protein localises to the cell surface. Its function is as follows. Protein that allows bacteria to adhere to mammalian host cells. Required for full virulence in mouse infection models when infected intranasally. Required for adhesion to host cells in vitro and for persistence in the lower respiratory tract. Binds host keratin 10 (KRT10) on lung cells which mediates adhesion via the C-terminus of the basic region (BR, residues 273-341); glycosylation of either protein is not required for the interaction. A region in the N-terminus (residues 122-166) self aggregates, contributing to mature biofilm formation. The basic region (BR, residues 187-385) also self aggregates; the BR binds DNA which enhances self aggregation. The protein is Pneumococcal serine-rich repeat protein of Streptococcus pneumoniae serotype 4 (strain ATCC BAA-334 / TIGR4).